The following is a 235-amino-acid chain: Proteasome subunit alpha (235 aa).

It belongs to the peptidase T1A family. As to quaternary structure, the 20S proteasome core is composed of 14 alpha and 14 beta subunits that assemble into four stacked heptameric rings, resulting in a barrel-shaped structure. The two inner rings, each composed of seven catalytic beta subunits, are sandwiched by two outer rings, each composed of seven alpha subunits. The catalytic chamber with the active sites is on the inside of the barrel. Has a gated structure, the ends of the cylinder being occluded by the N-termini of the alpha-subunits. Is capped by the proteasome-associated ATPase, ARC.

Its subcellular location is the cytoplasm. It functions in the pathway protein degradation; proteasomal Pup-dependent pathway. The formation of the proteasomal ATPase ARC-20S proteasome complex, likely via the docking of the C-termini of ARC into the intersubunit pockets in the alpha-rings, may trigger opening of the gate for substrate entry. Interconversion between the open-gate and close-gate conformations leads to a dynamic regulation of the 20S proteasome proteolysis activity. In terms of biological role, component of the proteasome core, a large protease complex with broad specificity involved in protein degradation. This is Proteasome subunit alpha from Paenarthrobacter aurescens (strain TC1).